Here is a 59-residue protein sequence, read N- to C-terminus: Cecropin-B2 (59 aa).

The N-terminal stretch at 1-23 (MNFNKLFLIVILAALLLLGQTEA) is a signal peptide. L57 is modified (leucine amide).

The protein belongs to the cecropin family.

It is found in the secreted. Functionally, cecropins have lytic and antibacterial activity against several Gram-positive and Gram-negative bacteria. This is Cecropin-B2 (CECB2) from Culex pipiens pipiens (Northern house mosquito).